A 37-amino-acid polypeptide reads, in one-letter code: Photosystem II reaction center protein M (37 aa).

Residues 7–27 (AFIAVLLFLAVPTAFLLIPYV) form a helical membrane-spanning segment.

It belongs to the PsbM family. PSII is composed of 1 copy each of membrane proteins PsbA, PsbB, PsbC, PsbD, PsbE, PsbF, PsbH, PsbI, PsbJ, PsbK, PsbL, PsbM, PsbT, PsbX, PsbY, PsbZ, Psb30/Ycf12, at least 3 peripheral proteins of the oxygen-evolving complex and a large number of cofactors. It forms dimeric complexes.

The protein localises to the plastid. Its subcellular location is the chloroplast thylakoid membrane. Its function is as follows. One of the components of the core complex of photosystem II (PSII). PSII is a light-driven water:plastoquinone oxidoreductase that uses light energy to abstract electrons from H(2)O, generating O(2) and a proton gradient subsequently used for ATP formation. It consists of a core antenna complex that captures photons, and an electron transfer chain that converts photonic excitation into a charge separation. This subunit is found at the monomer-monomer interface. In Pinus thunbergii (Japanese black pine), this protein is Photosystem II reaction center protein M.